The primary structure comprises 421 residues: Gamma-glutamyl phosphate reductase (421 aa).

The protein belongs to the gamma-glutamyl phosphate reductase family.

It localises to the cytoplasm. It catalyses the reaction L-glutamate 5-semialdehyde + phosphate + NADP(+) = L-glutamyl 5-phosphate + NADPH + H(+). The protein operates within amino-acid biosynthesis; L-proline biosynthesis; L-glutamate 5-semialdehyde from L-glutamate: step 2/2. Catalyzes the NADPH-dependent reduction of L-glutamate 5-phosphate into L-glutamate 5-semialdehyde and phosphate. The product spontaneously undergoes cyclization to form 1-pyrroline-5-carboxylate. The polypeptide is Gamma-glutamyl phosphate reductase (Acinetobacter baumannii (strain AYE)).